The chain runs to 1978 residues: Protein MOR1 (1978 aa).

HEAT repeat units lie at residues 48–86 (DPRL…AADS) and 165–202 (IPPK…WIGK). Positions 230-264 (AGAKPTRKIRSEQDKEPEAEASSDVVGDGPSEEAV) are disordered. The span at 238-247 (IRSEQDKEPE) shows a compositional bias: basic and acidic residues. HEAT repeat units follow at residues 322 to 359 (GDFS…GLRT), 363 to 400 (ASSR…AGCL), and 442 to 479 (KAHK…SVGM). The tract at residues 501-587 (IAGSGGGDQA…SVEPPEDVEP (87 aa)) is disordered. A compositionally biased stretch (low complexity) spans 510–527 (AGTSSVTVQSSVGSTATG). Residues 565-577 (GKKDGSVRNEGSK) are compositionally biased toward basic and acidic residues. HEAT repeat units lie at residues 849–886 (DIST…EANK), 890–928 (PTGT…AMGP), 932–969 (KASK…AVHL), and 1008–1045 (VDAI…VSGQ). A disordered region spans residues 1087 to 1115 (SKGVTKISKSTSNGTLKQGNRSRAVPTKG). Residues 1093 to 1107 (ISKSTSNGTLKQGNR) are compositionally biased toward polar residues. HEAT repeat units follow at residues 1230–1253 (LKVL…MTEA), 1254–1286 (EAAI…QIIQ), 1287–1325 (AYSV…TCGT), and 1328–1365 (GGLL…ILGA). A compositionally biased stretch (basic and acidic residues) spans 1393-1403 (MEKRREGKPGE). The tract at residues 1393 to 1431 (MEKRREGKPGEARAALRRSVRDSGPEVAEQSGDISQTVP) is disordered. An HEAT 14 repeat occupies 1535–1575 (RSCKYVLNTLMQTFQNKKLAHAVKEGTLESLITELLLWLLD). The disordered stretch occupies residues 1837-1862 (AAAGRTPSSLPLSTPPPSSLALPSPD).

This sequence belongs to the TOG/XMAP215 family. Expressed in roots, cotyledons, rosette leaves, stems, open flowers and green siliques.

It localises to the cytoplasm. The protein localises to the cytoskeleton. It is found in the phragmoplast. The protein resides in the spindle. Functionally, microtubule-binding protein that is essential for cortical microtubules organization and function. Essential for maintaining the interphase cortical array and for correct morphogenesis. Promotes rapid growth and shrinkage of microtubules and suppresses the pausing of interphase microtubules. Regulates the structure and function of microtubule arrays during mitosis and cytokinesis. Probably not required for cellulose microfibrils alignment in roots. This chain is Protein MOR1 (MOR1), found in Arabidopsis thaliana (Mouse-ear cress).